The primary structure comprises 136 residues: Large ribosomal subunit protein bL17 (136 aa).

The protein belongs to the bacterial ribosomal protein bL17 family. In terms of assembly, part of the 50S ribosomal subunit. Contacts protein L32.

The protein is Large ribosomal subunit protein bL17 of Rhodopseudomonas palustris (strain BisB5).